The sequence spans 446 residues: C4-dicarboxylate transport protein (446 aa).

The next 9 membrane-spanning stretches (helical) occupy residues 20-40, 56-76, 91-111, 160-180, 200-220, 233-253, 319-339, 344-364, and 367-387; these read HLYV…HFYP, LVKM…IAGM, IYFL…ANVV, GDIL…AGVG, LVHI…AFTI, FLIL…LGLV, IYMT…LSLG, LLLV…AGFI, and AATL…ILGI.

This sequence belongs to the dicarboxylate/amino acid:cation symporter (DAACS) (TC 2.A.23) family.

It is found in the cell inner membrane. In terms of biological role, responsible for the transport of dicarboxylates such as succinate, fumarate, and malate from the periplasm across the membrane. The sequence is that of C4-dicarboxylate transport protein from Azorhizobium caulinodans (strain ATCC 43989 / DSM 5975 / JCM 20966 / LMG 6465 / NBRC 14845 / NCIMB 13405 / ORS 571).